We begin with the raw amino-acid sequence, 351 residues long: Cytoplasmic dynein 2 light intermediate chain 1 (351 aa).

Residues 303–335 (GTLKAVQDPARDPQYAESEVDEMRVQKDQELEH) form a disordered region. Basic and acidic residues predominate over residues 323–335 (DEMRVQKDQELEH).

This sequence belongs to the dynein light intermediate chain family. As to quaternary structure, light intermediate chain of the cytoplasmic dynein complex 2, a multisubunit complex composed at least of eleven different proteins. The cytoplasmic dynein 2 complex consists of two catalytic heavy chains (HCs) and a number of non-catalytic subunits presented by intermediate chains (ICs), light intermediate chains (LICs) and light chains (LCs). Among them, a heavy chain (DYNC2H1), two intermediate chains (DYNC2I2 and DYNC2I1), a light intermediate chain (DYNC2LI1), and a light chain (DYNLT2B) are unique to the dynein-2 complex, but a subset of light chains are also shared by dynein-1 and dynein-2 complexes. Dynein-2 complex is built around two copies of cytoplasmic dynein 2 heavy chain 1 (DYNC2H1). The C-terminal region forms the motor domain, which converts the energy from ATP hydrolysis into movement. Its N-terminal region forms the tail, an extended structure that binds the other subunits and holds the two heavy chains in a homodimer. Interacts with DYNC2H1 (via N-terminus); this interaction stabilizes the dynein-2 complex structure. As to expression, specifically expressed by ciliated cells in brain, lung, spleen, testis and kidney (at protein level). Enriched in the ependymal layer lining the lateral ventricles (at protein level).

The protein resides in the cytoplasm. The protein localises to the cell projection. Its subcellular location is the cilium. It is found in the cytoskeleton. It localises to the cilium basal body. The protein resides in the cilium axoneme. The protein localises to the microtubule organizing center. Its subcellular location is the centrosome. Acts as one of several non-catalytic accessory components of the cytoplasmic dynein 2 complex (dynein-2 complex), a motor protein complex that drives the movement of cargos along microtubules within cilia and flagella in concert with the intraflagellar transport (IFT) system, facilitating the assembly of these organelles. Involved in the regulation of ciliary length. The chain is Cytoplasmic dynein 2 light intermediate chain 1 (Dync2li1) from Mus musculus (Mouse).